The primary structure comprises 225 residues: MAGHDSGNARRGRASFGAFVRKPVERDSVANAGQAAEQGSPEATQAWPDDAVEVGAVVDAYGLKGWVKVATHADAGRGGDALLNARRWWLERGAERLSVRIMQSKTRSDTVVAQPAGVSDRDAALSMRGFRVFVRREDFPALAADEFYWVDLIGLEVVNEQSVALGKVSGMIDNGVHSIMRVEYPATGKDGQPTTDERLIPFVGVYVKTVDQAARRIVVDWEADY.

Residues 144–225 (ADEFYWVDLI…RIVVDWEADY (82 aa)) enclose the PRC barrel domain.

Belongs to the RimM family. Binds ribosomal protein uS19.

Its subcellular location is the cytoplasm. An accessory protein needed during the final step in the assembly of 30S ribosomal subunit, possibly for assembly of the head region. Essential for efficient processing of 16S rRNA. May be needed both before and after RbfA during the maturation of 16S rRNA. It has affinity for free ribosomal 30S subunits but not for 70S ribosomes. The polypeptide is Ribosome maturation factor RimM (Burkholderia orbicola (strain AU 1054)).